Reading from the N-terminus, the 221-residue chain is Transmembrane protein 225B (221 aa).

4 membrane-spanning segments follow: residues 14–34 (WAIV…VSIF), 77–97 (VFLL…MPFA), 109–129 (FVLA…LVLH), and 147–167 (VLWP…AGTI).

It localises to the membrane. This Homo sapiens (Human) protein is Transmembrane protein 225B.